A 298-amino-acid polypeptide reads, in one-letter code: Ribosomal RNA small subunit methyltransferase A (298 aa).

S-adenosyl-L-methionine is bound by residues asparagine 30, valine 32, glycine 57, glutamate 78, aspartate 108, and asparagine 126.

This sequence belongs to the class I-like SAM-binding methyltransferase superfamily. rRNA adenine N(6)-methyltransferase family. RsmA subfamily.

The protein resides in the cytoplasm. It catalyses the reaction adenosine(1518)/adenosine(1519) in 16S rRNA + 4 S-adenosyl-L-methionine = N(6)-dimethyladenosine(1518)/N(6)-dimethyladenosine(1519) in 16S rRNA + 4 S-adenosyl-L-homocysteine + 4 H(+). Specifically dimethylates two adjacent adenosines (A1518 and A1519) in the loop of a conserved hairpin near the 3'-end of 16S rRNA in the 30S particle. May play a critical role in biogenesis of 30S subunits. This is Ribosomal RNA small subunit methyltransferase A from Cutibacterium acnes (strain DSM 16379 / KPA171202) (Propionibacterium acnes).